An 86-amino-acid polypeptide reads, in one-letter code: MHSFLLATAVPATLSWSPKVAGVMIACNILAIAFGKLTIKQQNVGTPMPSSNFFGGFGLGAVLGTASFGHILGAGVILGLANMGVL.

The next 2 helical transmembrane spans lie at L14–F34 and A61–A81.

Belongs to the PsaG/PsaK family.

It is found in the cellular thylakoid membrane. The sequence is that of Photosystem I reaction center subunit PsaK 1 (psaK1) from Synechocystis sp. (strain ATCC 27184 / PCC 6803 / Kazusa).